Reading from the N-terminus, the 217-residue chain is Pyridoxine/pyridoxamine 5'-phosphate oxidase (217 aa).

Residues 66-71 (RMVLLK), 81-82 (FT), Arg87, Lys88, and Gln110 contribute to the FMN site. Lys71 is a binding site for substrate. Positions 128, 132, and 136 each coordinate substrate. FMN-binding positions include 145 to 146 (QS) and Trp190. Substrate is bound at residue 196 to 198 (RLH). An FMN-binding site is contributed by Arg200.

The protein belongs to the pyridoxamine 5'-phosphate oxidase family. In terms of assembly, homodimer. The cofactor is FMN.

The catalysed reaction is pyridoxamine 5'-phosphate + O2 + H2O = pyridoxal 5'-phosphate + H2O2 + NH4(+). It catalyses the reaction pyridoxine 5'-phosphate + O2 = pyridoxal 5'-phosphate + H2O2. It functions in the pathway cofactor metabolism; pyridoxal 5'-phosphate salvage; pyridoxal 5'-phosphate from pyridoxamine 5'-phosphate: step 1/1. It participates in cofactor metabolism; pyridoxal 5'-phosphate salvage; pyridoxal 5'-phosphate from pyridoxine 5'-phosphate: step 1/1. In terms of biological role, catalyzes the oxidation of either pyridoxine 5'-phosphate (PNP) or pyridoxamine 5'-phosphate (PMP) into pyridoxal 5'-phosphate (PLP). The protein is Pyridoxine/pyridoxamine 5'-phosphate oxidase of Colwellia psychrerythraea (strain 34H / ATCC BAA-681) (Vibrio psychroerythus).